The following is a 249-amino-acid chain: Probable proteasome subunit alpha type-2 (249 aa).

This sequence belongs to the peptidase T1A family. As to quaternary structure, the 26S proteasome consists of a 20S proteasome core and two 19S regulatory subunits. The 20S proteasome core is composed of 28 subunits that are arranged in four stacked rings, resulting in a barrel-shaped structure. The two end rings are each formed by seven alpha subunits, and the two central rings are each formed by seven beta subunits. The catalytic chamber with the active sites is on the inside of the barrel.

It is found in the cytoplasm. It localises to the nucleus. The proteasome is a multicatalytic proteinase complex which is characterized by its ability to cleave peptides with Arg, Phe, Tyr, Leu, and Glu adjacent to the leaving group at neutral or slightly basic pH. The proteasome has an ATP-dependent proteolytic activity. The protein is Probable proteasome subunit alpha type-2 (pca-2) of Neurospora crassa (strain ATCC 24698 / 74-OR23-1A / CBS 708.71 / DSM 1257 / FGSC 987).